Reading from the N-terminus, the 921-residue chain is Isoleucine--tRNA ligase 1 (921 aa).

The 'HIGH' region signature appears at 57–67 (PYANGDIHMGH). Glutamate 552 serves as a coordination point for L-isoleucyl-5'-AMP. Positions 593–597 (KMSKS) match the 'KMSKS' region motif. Residue lysine 596 coordinates ATP. Zn(2+) contacts are provided by cysteine 888, cysteine 891, cysteine 908, and cysteine 911.

The protein belongs to the class-I aminoacyl-tRNA synthetase family. IleS type 1 subfamily. As to quaternary structure, monomer. Zn(2+) serves as cofactor.

Its subcellular location is the cytoplasm. The enzyme catalyses tRNA(Ile) + L-isoleucine + ATP = L-isoleucyl-tRNA(Ile) + AMP + diphosphate. Its function is as follows. Catalyzes the attachment of isoleucine to tRNA(Ile). As IleRS can inadvertently accommodate and process structurally similar amino acids such as valine, to avoid such errors it has two additional distinct tRNA(Ile)-dependent editing activities. One activity is designated as 'pretransfer' editing and involves the hydrolysis of activated Val-AMP. The other activity is designated 'posttransfer' editing and involves deacylation of mischarged Val-tRNA(Ile). The protein is Isoleucine--tRNA ligase 1 of Bacillus cereus (strain ATCC 10987 / NRS 248).